The following is a 291-amino-acid chain: GTPase Era (291 aa).

Positions 2-167 constitute an Era-type G domain; the sequence is KSGFVSIIGR…LDEIVKYLDK (166 aa). Positions 10 to 17 are G1; that stretch reads GRTNAGKS. 10–17 contributes to the GTP binding site; sequence GRTNAGKS. Residues 36-40 are G2; that stretch reads NATRR. The G3 stretch occupies residues 57 to 60; the sequence is DTPG. GTP-binding positions include 57-61 and 116-119; these read DTPGL and NKVD. The tract at residues 116–119 is G4; sequence NKVD. Positions 146–148 are G5; sequence YSS. The region spanning 186 to 274 is the KH type-2 domain; the sequence is YRDFILESIY…LLKLFVTVKK (89 aa).

This sequence belongs to the TRAFAC class TrmE-Era-EngA-EngB-Septin-like GTPase superfamily. Era GTPase family. In terms of assembly, monomer.

The protein localises to the cytoplasm. Its subcellular location is the cell inner membrane. An essential GTPase that binds both GDP and GTP, with rapid nucleotide exchange. Plays a role in 16S rRNA processing and 30S ribosomal subunit biogenesis and possibly also in cell cycle regulation and energy metabolism. This Campylobacter jejuni subsp. jejuni serotype O:6 (strain 81116 / NCTC 11828) protein is GTPase Era.